The primary structure comprises 466 residues: Ribulose bisphosphate carboxylase large chain (466 aa).

Lysine 4 bears the N6,N6,N6-trimethyllysine mark. The substrate site is built by asparagine 113 and threonine 163. The Proton acceptor role is filled by lysine 165. Lysine 167 serves as a coordination point for substrate. Mg(2+) contacts are provided by lysine 191, aspartate 193, and glutamate 194. Position 191 is an N6-carboxylysine (lysine 191). The Proton acceptor role is filled by histidine 284. Residues arginine 285, histidine 317, and serine 369 each contribute to the substrate site.

Belongs to the RuBisCO large chain family. Type I subfamily. As to quaternary structure, heterohexadecamer of 8 large chains and 8 small chains; disulfide-linked. The disulfide link is formed within the large subunit homodimers. Mg(2+) is required as a cofactor. In terms of processing, the disulfide bond which can form in the large chain dimeric partners within the hexadecamer appears to be associated with oxidative stress and protein turnover.

The protein resides in the plastid. The protein localises to the chloroplast. The enzyme catalyses 2 (2R)-3-phosphoglycerate + 2 H(+) = D-ribulose 1,5-bisphosphate + CO2 + H2O. The catalysed reaction is D-ribulose 1,5-bisphosphate + O2 = 2-phosphoglycolate + (2R)-3-phosphoglycerate + 2 H(+). In terms of biological role, ruBisCO catalyzes two reactions: the carboxylation of D-ribulose 1,5-bisphosphate, the primary event in carbon dioxide fixation, as well as the oxidative fragmentation of the pentose substrate in the photorespiration process. Both reactions occur simultaneously and in competition at the same active site. In Drimys winteri (Winter's bark), this protein is Ribulose bisphosphate carboxylase large chain.